Here is an 855-residue protein sequence, read N- to C-terminus: Pentatricopeptide repeat-containing protein At1g74750 (855 aa).

The segment at Gly21–Gly40 is disordered. PPR repeat units lie at residues Asp358–Pro392, Asn393–Pro427, Asp428–Pro462, Asp463–Pro497, Asn498–Pro532, Asp533–Pro567, Asp568–Pro602, and Asn603–Pro637. The Smr domain occupies Ile755–Glu838.

This sequence belongs to the PPR family. P subfamily.

The polypeptide is Pentatricopeptide repeat-containing protein At1g74750 (Arabidopsis thaliana (Mouse-ear cress)).